A 424-amino-acid polypeptide reads, in one-letter code: UDP-sugar transporter protein SLC35A5 (424 aa).

Over M1 to H8 the chain is Cytoplasmic. A helical transmembrane segment spans residues P9–L29. The Lumenal portion of the chain corresponds to S30–T53. The helical transmembrane segment at V54–I74 threads the bilayer. At K75 to D93 the chain is on the cytoplasmic side. Residues F94–S116 form a helical membrane-spanning segment. The Lumenal portion of the chain corresponds to Y117–Q119. The chain crosses the membrane as a helical span at residues P120–L142. Over K143 to N147 the chain is Cytoplasmic. The chain crosses the membrane as a helical span at residues W148–T168. The Lumenal portion of the chain corresponds to K169–R228. A glycan (N-linked (GlcNAc...) asparagine) is linked at N204. A helical transmembrane segment spans residues L229–Y249. Residues N250–S263 are Cytoplasmic-facing. The helical transmembrane segment at I264–G284 threads the bilayer. Topologically, residues L285–S303 are lumenal. A helical transmembrane segment spans residues A304 to L324. Residues K325–M330 are Cytoplasmic-facing. Residues F331–F351 traverse the membrane as a helical segment. Residues D352–R354 are Lumenal-facing. Residues P355 to A375 form a helical membrane-spanning segment. Over S376 to F424 the chain is Cytoplasmic. A phosphoserine mark is found at S394, S416, and S419. The disordered stretch occupies residues L397–F424. Over residues L408 to D417 the composition is skewed to basic and acidic residues.

It belongs to the nucleotide-sugar transporter family. SLC35A subfamily. Probably forms homooligomers and heterooligomers with SLC35A1, SLC35A2, SLC35A3 and SLC35A4.

The protein localises to the golgi apparatus membrane. It catalyses the reaction UMP(out) + UDP-alpha-D-glucuronate(in) = UMP(in) + UDP-alpha-D-glucuronate(out). The enzyme catalyses UMP(out) + UDP-N-acetyl-alpha-D-glucosamine(in) = UMP(in) + UDP-N-acetyl-alpha-D-glucosamine(out). The catalysed reaction is UDP-N-acetyl-alpha-D-galactosamine(in) + UMP(out) = UDP-N-acetyl-alpha-D-galactosamine(out) + UMP(in). In terms of biological role, probable UDP-sugar:UMP transmembrane antiporter involved in UDP-alpha-D-glucuronate/UDP-GlcA, UDP-GlcNAc/UDP-N-acetyl-alpha-D-glucosamine and UDP-N-acetyl-alpha-D-galactosamine/UDP-GalNAc transport from the cytosol to the lumen of the Golgi. The sequence is that of UDP-sugar transporter protein SLC35A5 from Homo sapiens (Human).